Here is a 1021-residue protein sequence, read N- to C-terminus: Collagen alpha-1(I) chain (1021 aa).

Residues D1 to P1021 are disordered. K3 carries the post-translational modification Allysine. S4 is subject to Phosphoserine. Residues P23, P26, P29, P38, P41, P44, P59, P74, P80, P89, and P95 each carry the 4-hydroxyproline modification. The segment covering P31–M50 has biased composition (low complexity). Basic and acidic residues predominate over residues N62–E76. The residue at position 98 (K98) is a 5-hydroxylysine; alternate. K98 is a glycosylation site (O-linked (Gal...) hydroxylysine; alternate). S104 bears the Phosphoserine mark. The segment covering D112–N128 has biased composition (low complexity). 4-hydroxyproline is present on residues P122, P125, P131, P140, P146, P167, P176, P179, P206, P209, P221, P227, P236, P242, P245, and P260. A compositionally biased stretch (low complexity) spans P146 to A164. Pro residues predominate over residues P166–F178. Over residues A212–P262 the composition is skewed to low complexity. The residue at position 263 (K263) is a 5-hydroxylysine. 8 positions are modified to 4-hydroxyproline: P269, P272, P284, P293, P308, P314, P323, and P329. Over residues G318–G327 the composition is skewed to gly residues. Position 338 is a 5-hydroxylysine (K338). 4-hydroxyproline occurs at positions 347, 356, 362, 368, 377, 380, 389, 398, 404, 416, 425, 434, 437, 455, 472, 478, 484, 490, 496, 502, 514, 523, 534, 546, 549, 555, 561, and 570. Residues K371–P425 are compositionally biased toward low complexity. Over residues P484–Q493 the composition is skewed to low complexity. Low complexity predominate over residues N536 to Q558. Residue K582 is modified to 5-hydroxylysine. A 4-hydroxyproline mark is found at P588 and P603. Over residues A615 to A629 the composition is skewed to low complexity. Position 618 is a phosphoserine (S618). Residues P630, P636, P639, P648, P654, P681, and P690 each carry the 4-hydroxyproline modification. Over residues A642 to S672 the composition is skewed to low complexity. A 5-hydroxylysine modification is found at K693. The segment covering S698–V714 has biased composition (low complexity). 4-hydroxyproline is present on residues P702 and P708. P716 is modified (3-hydroxyproline). 16 positions are modified to 4-hydroxyproline: P717, P726, P729, P750, P759, P768, P777, P794, P803, P806, P812, P827, P833, P839, P848, and P854. Residues E743 to E752 show a composition bias toward low complexity. The segment covering S762–P777 has biased composition (low complexity). Residues P826–A836 are compositionally biased toward pro residues. Residues P838 to S853 are compositionally biased toward low complexity. K863 carries the 5-hydroxylysine modification. The segment covering P871–V886 has biased composition (pro residues). 4-hydroxyproline occurs at positions 874, 877, and 880. Positions A907 to P921 are enriched in low complexity. Over residues R922–I936 the composition is skewed to basic and acidic residues. K925 bears the 5-hydroxylysine mark. K937 bears the 5-hydroxylysine; alternate mark. K937 carries an O-linked (Gal...) hydroxylysine; alternate glycan. 4-hydroxyproline is present on residues P952, P955, P973, and P988. Positions P955–P988 are enriched in low complexity. Position 993 is a 3-hydroxyproline (P993). P994 is modified (4-hydroxyproline). A compositionally biased stretch (pro residues) spans V1006–P1021. A 3-hydroxyproline modification is found at P1008. Residue P1009 is modified to 4-hydroxyproline. P1011 is subject to 3-hydroxyproline. 4-hydroxyproline is present on P1012. 3-hydroxyproline is present on P1014. 4-hydroxyproline occurs at positions 1015, 1018, and 1021.

The protein belongs to the fibrillar collagen family. Trimers of one alpha 2(I) and two alpha 1(I) chains. Contains mostly 4-hydroxyproline. Proline residues at the third position of the tripeptide repeating unit (G-X-Y) are hydroxylated in some or all of the chains. In terms of processing, contains 3-hydroxyproline at a few sites. This modification occurs on the first proline residue in the sequence motif Gly-Pro-Hyp, where Hyp is 4-hydroxyproline. Post-translationally, lysine residues at the third position of the tripeptide repeating unit (G-X-Y) are 5-hydroxylated in some or all of the chains. O-glycosylated on hydroxylated lysine residues. The O-linked glycan consists of a Glc-Gal disaccharide. In terms of tissue distribution, expressed in bones.

Its subcellular location is the secreted. The protein localises to the extracellular space. It is found in the extracellular matrix. Its function is as follows. Type I collagen is a member of group I collagen (fibrillar forming collagen). This chain is Collagen alpha-1(I) chain, found in Doedicurus sp. (South American giant glyptodont).